The following is a 259-amino-acid chain: Protein unc-50 homolog (259 aa).

Over residues 1–15 (MLPTSSPQIHRNGSL) the composition is skewed to polar residues. The interval 1–22 (MLPTSSPQIHRNGSLSERDAAR) is disordered. At 1–80 (MLPTSSPQIH…TKDQWARDDP (80 aa)) the chain is on the cytoplasmic side. The chain crosses the membrane as a helical span at residues 81 to 101 (AFLVLLSIWLCVSTVGFGLVL). Over 102–110 (DMGFVETLT) the chain is Lumenal. The chain crosses the membrane as a helical span at residues 111–131 (LLLWVVFIDCIGVGLLISTLM). Over 132-162 (WFVTNKYLMKHPNRDYDVEWGYAFDVHLNAF) the chain is Cytoplasmic. A helical transmembrane segment spans residues 163 to 183 (YPLLVILHFLQLFFINHVVVI). Topologically, residues 184 to 198 (SSDWFLGYFVGNTMW) are lumenal. A helical transmembrane segment spans residues 199 to 219 (LIAIGYYVYITFLGYSALPFL). The Cytoplasmic portion of the chain corresponds to 220-222 (KNT). The chain crosses the membrane as a helical span at residues 223–243 (VVLLYPFALLGLLYVLSISLG). Over 244 to 259 (WNFTKGLCWFYKHRVQ) the chain is Lumenal.

The protein belongs to the unc-50 family.

The protein localises to the nucleus inner membrane. It is found in the golgi apparatus membrane. Functionally, involved in the cell surface expression of neuronal nicotinic receptors. Binds RNA. This chain is Protein unc-50 homolog (unc50), found in Danio rerio (Zebrafish).